The sequence spans 348 residues: Oxygen-dependent coproporphyrinogen-III oxidase (348 aa).

Ser104 contacts substrate. A divalent metal cation is bound by residues His108 and His118. The active-site Proton donor is the His118. Substrate is bound at residue 120–122; the sequence is NYR. Residues His152 and His182 each contribute to the a divalent metal cation site. The interval 272-307 is important for dimerization; that stretch reads YAEFNLVWDRGTIFGLQTNGRTESILMSLPPLARWE.

It belongs to the aerobic coproporphyrinogen-III oxidase family. As to quaternary structure, homodimer. It depends on a divalent metal cation as a cofactor.

The protein resides in the cytoplasm. The catalysed reaction is coproporphyrinogen III + O2 + 2 H(+) = protoporphyrinogen IX + 2 CO2 + 2 H2O. The protein operates within porphyrin-containing compound metabolism; protoporphyrin-IX biosynthesis; protoporphyrinogen-IX from coproporphyrinogen-III (O2 route): step 1/1. Functionally, involved in the heme and chlorophyll biosynthesis. Catalyzes the aerobic oxidative decarboxylation of propionate groups of rings A and B of coproporphyrinogen-III to yield the vinyl groups in protoporphyrinogen-IX. This chain is Oxygen-dependent coproporphyrinogen-III oxidase, found in Prochlorococcus marinus (strain NATL2A).